The following is a 408-amino-acid chain: Tripartite motif-containing protein 59 (408 aa).

The segment at 10–60 (CSICYSLFEDPRVLPCSHTFCRSCLEGVIQLSSNFSIWRPLRVPLKCPNCR) adopts an RING-type zinc-finger fold. Residues 92-134 (SDVATCSEHYRQPLNVYCLLDKKLVCGHCLTIGKHNGHPIDDL) form a B box-type zinc finger. Zn(2+) contacts are provided by Cys-97, His-100, Cys-120, and His-126. Residues 163–247 (LIEKLKEQKA…LNTSIQKEES (85 aa)) are a coiled coil. A helical transmembrane segment spans residues 333–353 (ANPLSVTFIFTVIIAIAVLSF).

It belongs to the TRIM/RBCC family. Interacts with ECSIT.

It localises to the endoplasmic reticulum membrane. In terms of biological role, may serve as a multifunctional regulator for innate immune signaling pathways. In Gallus gallus (Chicken), this protein is Tripartite motif-containing protein 59 (TRIM59).